The following is an 82-amino-acid chain: Small ribosomal subunit protein bS16 (82 aa).

This sequence belongs to the bacterial ribosomal protein bS16 family.

This Dehalococcoides mccartyi (strain ATCC BAA-2100 / JCM 16839 / KCTC 5957 / BAV1) protein is Small ribosomal subunit protein bS16.